The sequence spans 137 residues: Large ribosomal subunit protein bL17 (137 aa).

It belongs to the bacterial ribosomal protein bL17 family. As to quaternary structure, part of the 50S ribosomal subunit. Contacts protein L32.

The sequence is that of Large ribosomal subunit protein bL17 from Caulobacter sp. (strain K31).